The sequence spans 203 residues: Large ribosomal subunit protein bL25 (203 aa).

It belongs to the bacterial ribosomal protein bL25 family. CTC subfamily. As to quaternary structure, part of the 50S ribosomal subunit; part of the 5S rRNA/L5/L18/L25 subcomplex. Contacts the 5S rRNA. Binds to the 5S rRNA independently of L5 and L18.

This is one of the proteins that binds to the 5S RNA in the ribosome where it forms part of the central protuberance. The sequence is that of Large ribosomal subunit protein bL25 from Wolbachia pipientis subsp. Culex pipiens (strain wPip).